Consider the following 1381-residue polypeptide: Hepatocyte growth factor receptor (1381 aa).

The signal sequence occupies residues Met1–Gly24. Residues Glu25–Thr932 lie on the Extracellular side of the membrane. In terms of domain architecture, Sema spans Lys27 to Leu515. N-linked (GlcNAc...) asparagine glycosylation occurs at Asn45. Disulfide bonds link Cys95–Cys101, Cys98–Cys160, Cys133–Cys141, and Cys172–Cys175. N-linked (GlcNAc...) asparagine glycosylation occurs at Asn106. N-linked (GlcNAc...) asparagine glycosylation is present at Asn149. Residue Asn202 is glycosylated (N-linked (GlcNAc...) asparagine). Disulfide bonds link Cys298-Cys363 and Cys385-Cys397. An N-linked (GlcNAc...) asparagine glycan is attached at Asn399. Cystine bridges form between Cys520–Cys538, Cys526–Cys561, Cys529–Cys545, and Cys541–Cys551. IPT/TIG domains are found at residues Pro563–Val655, Pro657–Arg739, and Pro742–Val836. A glycan (O-linked (Man) threonine) is linked at Thr582. Residues Asn607 and Asn635 are each glycosylated (N-linked (GlcNAc...) asparagine). O-linked (Man) threonine glycosylation is found at Thr676 and Thr761. N-linked (GlcNAc...) asparagine glycosylation is found at Asn785, Asn879, and Asn930. The chain crosses the membrane as a helical span at residues Gly933 to Leu955. Over Lys956–Thr1381 the chain is Cytoplasmic. At Ser966 the chain carries Phosphoserine. At Thr977 the chain carries Phosphothreonine. Phosphoserine occurs at positions 990, 997, and 1000. Tyr1003 carries the post-translational modification Phosphotyrosine. In terms of domain architecture, Protein kinase spans Val1078–Ile1345. ATP contacts are provided by residues Ile1084–Val1092 and Lys1110. Residue Asp1204 is the Proton acceptor of the active site. Residues Leu1212–Thr1381 are interaction with RANBP9. Tyr1230 is modified (phosphotyrosine). A phosphotyrosine; by autocatalysis mark is found at Tyr1234 and Tyr1235. The residue at position 1289 (Thr1289) is a Phosphothreonine. Positions Trp1320–Val1359 are interaction with MUC20. 2 positions are modified to phosphotyrosine; by autocatalysis: Tyr1349 and Tyr1356. Tyr1365 carries the post-translational modification Phosphotyrosine.

Belongs to the protein kinase superfamily. Tyr protein kinase family. Heterodimer made of an alpha chain (50 kDa) and a beta chain (145 kDa) which are disulfide linked. Binds PLXNB1. Interacts when phosphorylated with downstream effectors including STAT3, PIK3R1, SRC, PCLG1, GRB2 and GAB1. Interacts with SPSB1, SPSB2 and SPSB4. Interacts with INPP5D/SHIP1. When phosphorylated at Tyr-1356, interacts with INPPL1/SHIP2. Interacts with RANBP9 and RANBP10, as well as SPSB1, SPSB2, SPSB3 and SPSB4. SPSB1 binding occurs in the presence and in the absence of HGF, however HGF treatment has a positive effect on this interaction. Interacts with MUC20; prevents interaction with GRB2 and suppresses hepatocyte growth factor-induced cell proliferation. Interacts with GRB10. Interacts with PTPN1 and PTPN2. Interacts with HSP90AA1 and HSP90AB1; the interaction suppresses MET kinase activity. Interacts with tensin TNS3. Interacts (when phosphorylated) with tensin TNS4 (via SH2 domain); the interaction increases MET protein stability by inhibiting MET endocytosis and subsequent lysosomal degradation. Post-translationally, autophosphorylated in response to ligand binding on Tyr-1234 and Tyr-1235 in the kinase domain leading to further phosphorylation of Tyr-1349 and Tyr-1356 in the C-terminal multifunctional docking site. Dephosphorylated by PTPRJ at Tyr-1349 and Tyr-1365. Dephosphorylated by PTPN1 and PTPN2. Ubiquitinated. Ubiquitination by CBL regulates the receptor stability and activity through proteasomal degradation. In terms of processing, O-mannosylation of IPT/TIG domains by TMEM260 is required for protein maturation. O-mannosylated residues are composed of single mannose glycans that are not elongated or modified.

It localises to the membrane. It carries out the reaction L-tyrosyl-[protein] + ATP = O-phospho-L-tyrosyl-[protein] + ADP + H(+). With respect to regulation, in its inactive state, the C-terminal tail interacts with the catalytic domain and inhibits the kinase activity. Upon ligand binding, the C-terminal tail is displaced and becomes phosphorylated, thus increasing the kinase activity. Its function is as follows. Receptor tyrosine kinase that transduces signals from the extracellular matrix into the cytoplasm by binding to hepatocyte growth factor/HGF ligand. Regulates many physiological processes including proliferation, scattering, morphogenesis and survival. Ligand binding at the cell surface induces autophosphorylation of MET on its intracellular domain that provides docking sites for downstream signaling molecules. Following activation by ligand, interacts with the PI3-kinase subunit PIK3R1, PLCG1, SRC, GRB2, STAT3 or the adapter GAB1. Recruitment of these downstream effectors by MET leads to the activation of several signaling cascades including the RAS-ERK, PI3 kinase-AKT, or PLCgamma-PKC. The RAS-ERK activation is associated with the morphogenetic effects while PI3K/AKT coordinates prosurvival effects. During embryonic development, MET signaling plays a role in gastrulation, development and migration of muscles and neuronal precursors, angiogenesis and kidney formation. In adults, participates in wound healing as well as organ regeneration and tissue remodeling. Also promotes differentiation and proliferation of hematopoietic cells. The polypeptide is Hepatocyte growth factor receptor (MET) (Saimiri boliviensis boliviensis (Bolivian squirrel monkey)).